The sequence spans 229 residues: E3 ubiquitin ligase TRIM40 (229 aa).

An RING-type zinc finger spans residues 14–57 (CPICQESLKEAVSTNCGHLFCRVCLTQHVEKASASGVFCCPLCR). The B box-type zinc-finger motif lies at 66–107 (GTGYICPNHQKRVCRFCEESRLLLCVECLVSPEHMSHHELTI). Zn(2+) is bound by residues Cys-71, His-74, Cys-93, and His-99. Residues 107-154 (IENALSHYKERLNRRSRKLRKDIAELQRLKAQQEKKLQALQQWLGQLE) are a coiled coil.

Belongs to the TRIM/RBCC family. In terms of assembly, interacts with NEDD8.

The enzyme catalyses S-ubiquitinyl-[E2 ubiquitin-conjugating enzyme]-L-cysteine + [acceptor protein]-L-lysine = [E2 ubiquitin-conjugating enzyme]-L-cysteine + N(6)-ubiquitinyl-[acceptor protein]-L-lysine.. Functionally, E3 ubiquitin-protein ligase that plays a role in the limitation of the innate immune response. Mediates inhibition of the RLR signaling pathway by ubiquitinating RIGI and IFIH1 receptors, leading to their proteasomal degradation. Also promotes the neddylation of IKBKG/NEMO, stabilizing NFKBIA, and thereby inhibiting of NF-kappa-B nuclear translocation and activation. The sequence is that of E3 ubiquitin ligase TRIM40 (TRIM40) from Pan troglodytes (Chimpanzee).